The primary structure comprises 453 residues: Vitamin D3 receptor A (453 aa).

The segment at residues 53-128 (PRICGVCGDK…IGMMKEFILT (76 aa)) is a DNA-binding region (nuclear receptor). Cys-56, Cys-59, Cys-73, Cys-76, Cys-92, Cys-98, Cys-108, and Cys-111 together coordinate Zn(2+). NR C4-type zinc fingers lie at residues 56 to 76 (CGVC…CEGC) and 92 to 111 (CPFN…CQAC). The tract at residues 129 to 158 (DEEVQRKKDLIMKRKEEEAAREARKPRLSD) is hinge. Residues 159-449 (EQMQIINSLV…LTPLVLEVFG (291 aa)) enclose the NR LBD domain. Calcitriol-binding residues include Tyr-175 and Ser-265. The interval 274 to 292 (KMIPGFRDLTAEDQIALLK) is interaction with coactivator LXXLL motif. Residues Arg-302, Ser-306, His-333, and His-423 each contribute to the calcitriol site. The 9aaTAD motif lies at 442 to 450 (PLVLEVFGS).

The protein belongs to the nuclear hormone receptor family. NR1 subfamily. Homodimer in the absence of bound vitamin D3. Heterodimer with RXRA after vitamin D3 binding. Interacts with ncoa1 and possibly other coactivators, leading to a strong increase of transcription of target genes. Detected in embryo 24 to 48 hours after fertilization and in gastrula.

Its subcellular location is the nucleus. It is found in the cytoplasm. In terms of biological role, nuclear receptor for calcitriol, the active form of vitamin D3 which mediates the action of this vitamin on cells. Enters the nucleus upon vitamin D3 binding where it forms heterodimers with the retinoid X receptor/RXR. The VDR-RXR heterodimers bind to specific response elements on DNA and activate the transcription of vitamin D3-responsive target genes. Recruited to promoters via its interaction with BAZ1B/WSTF which mediates the interaction with acetylated histones, an essential step for VDR-promoter association. Plays a central role in calcium homeostasis. The chain is Vitamin D3 receptor A (vdra) from Danio rerio (Zebrafish).